A 405-amino-acid chain; its full sequence is S-arrestin (405 aa).

The residue at position 234 (T234) is a Phosphothreonine.

This sequence belongs to the arrestin family. As to quaternary structure, monomer. Homodimer. Homotetramer. Interacts with RHO (via the phosphorylated C-terminus).

It is found in the cell projection. Its subcellular location is the cilium. The protein localises to the photoreceptor outer segment. It localises to the membrane. In terms of biological role, binds to photoactivated, phosphorylated RHO and terminates RHO signaling via G-proteins by competing with G-proteins for the same binding site on RHO. May play a role in preventing light-dependent degeneration of retinal photoreceptor cells. This Canis lupus familiaris (Dog) protein is S-arrestin (SAG).